We begin with the raw amino-acid sequence, 374 residues long: Ras-related GTP-binding protein B (374 aa).

M1 bears the N-acetylmethionine mark. The segment covering 1–15 has biased composition (basic and acidic residues); sequence MEESDSEKKTEKENV. Positions 1-30 are disordered; the sequence is MEESDSEKKTEKENVGPKVEPPLGEPEGSL. 2 residues coordinate GTP: S49 and G50. GDP-binding residues include G50, S51, G52, K53, T54, S55, T69, and T75. Residues G52, K53, T54, S55, T69, T75, G126, and H188 each coordinate GTP. The GDP site is built by H188 and D191. K203 participates in a covalent cross-link: Glycyl lysine isopeptide (Lys-Gly) (interchain with G-Cter in ubiquitin). Residues L209 and I225 each contribute to the GDP site. Residue I225 coordinates GTP. Residues K281, K291, and K305 each participate in a glycyl lysine isopeptide (Lys-Gly) (interchain with G-Cter in ubiquitin) cross-link.

It belongs to the GTR/RAG GTP-binding protein family. In terms of assembly, interacts with RRAGC and RRAGD; heterodimerization stabilizes RRAG proteins. The GTP-bound form of RRAGB (in complex with the GDP-bound form of RRAGC or RRAGD) interacts with RPTOR, thereby promoting recruitment of mTORC1 to the lysosomes. Component of the lysosomal folliculin complex (LFC), composed of FLCN, FNIP1 (or FNIP2), RagA/RRAGA or RagB/RRAGB GDP-bound, RagC/RRAGC or RagD/RRAGD GTP-bound, and Ragulator. Interacts with SH3BP4; the interaction with this negative regulator is most probably direct, preferentially occurs with the inactive GDP-bound form of RRAGB, is negatively regulated by amino acids and prevents interaction with RPTOR. Interacts with the GATOR1 complex; inactivates RRAGB. The Rag heterodimer interacts with SLC38A9; the probable amino acid sensor. Interacts with SESN1, SESN2 and SESN3.

Its subcellular location is the cytoplasm. It localises to the lysosome membrane. The catalysed reaction is GTP + H2O = GDP + phosphate + H(+). Its activity is regulated as follows. The activation of GTP-binding proteins is generally mediated by a guanine exchange factor (GEF), while inactivation through hydrolysis of bound GTP is catalyzed by a GTPase activating protein (GAP). The Ragulator complex functions as a GEF and promotes the active GTP-bound form. The GATOR1 complex functions as a GAP and stimulates RRAGB GTPase activity to turn it into its inactive GDP-bound form, preventing mTORC1 recruitment and activation. Guanine nucleotide-binding protein that plays a crucial role in the cellular response to amino acid availability through regulation of the mTORC1 signaling cascade. Forms heterodimeric Rag complexes with RagC/RRAGC or RagD/RRAGD and cycles between an inactive GDP-bound and an active GTP-bound form: RagB/RRAGB is in its active form when GTP-bound RagB/RRAGB forms a complex with GDP-bound RagC/RRAGC (or RagD/RRAGD) and in an inactive form when GDP-bound RagB/RRAGB heterodimerizes with GTP-bound RagC/RRAGC (or RagD/RRAGD). In its GTP-bound active form, promotes the recruitment of mTORC1 to the lysosomes and its subsequent activation by the GTPase RHEB. Involved in the RCC1/Ran-GTPase pathway. The chain is Ras-related GTP-binding protein B from Mus musculus (Mouse).